The primary structure comprises 38 residues: Large ribosomal subunit protein bL36 (38 aa).

The protein belongs to the bacterial ribosomal protein bL36 family.

The protein is Large ribosomal subunit protein bL36 of Buchnera aphidicola subsp. Cinara cedri (strain Cc).